A 114-amino-acid polypeptide reads, in one-letter code: Probable 4-amino-4-deoxy-L-arabinose-phosphoundecaprenol flippase subunit ArnE (114 aa).

3 helical membrane-spanning segments follow: residues 41–61 (PWLI…IYLL), 64–84 (LPLS…LIGS), and 94–114 (YHNW…GGLL). The EamA domain maps to 53 to 112 (GMLLWIYLLQRLPLSMAYPMLSINLVLVLIGSRLFFHEQISYHNWLGAGAIIIGALLLGG).

Belongs to the ArnE family. As to quaternary structure, heterodimer of ArnE and ArnF.

The protein localises to the cell inner membrane. It participates in bacterial outer membrane biogenesis; lipopolysaccharide biosynthesis. Translocates 4-amino-4-deoxy-L-arabinose-phosphoundecaprenol (alpha-L-Ara4N-phosphoundecaprenol) from the cytoplasmic to the periplasmic side of the inner membrane. This Aeromonas salmonicida (strain A449) protein is Probable 4-amino-4-deoxy-L-arabinose-phosphoundecaprenol flippase subunit ArnE.